We begin with the raw amino-acid sequence, 469 residues long: Arginine biosynthesis bifunctional protein ArgJ, chloroplastic (469 aa).

Substrate is bound by residues T213, K239, T250, E337, N464, and T469. T250 (nucleophile) is an active-site residue.

Belongs to the ArgJ family. As to quaternary structure, heterodimer of an alpha and a beta chain.

Its subcellular location is the plastid. The protein resides in the chloroplast. It carries out the reaction N(2)-acetyl-L-ornithine + L-glutamate = N-acetyl-L-glutamate + L-ornithine. The catalysed reaction is L-glutamate + acetyl-CoA = N-acetyl-L-glutamate + CoA + H(+). Its pathway is amino-acid biosynthesis; L-arginine biosynthesis; L-ornithine and N-acetyl-L-glutamate from L-glutamate and N(2)-acetyl-L-ornithine (cyclic): step 1/1. The protein operates within amino-acid biosynthesis; L-arginine biosynthesis; N(2)-acetyl-L-ornithine from L-glutamate: step 1/4. Its function is as follows. Catalyzes two activities which are involved in the cyclic version of arginine biosynthesis: the synthesis of acetylglutamate from glutamate and acetyl-CoA, and of ornithine by transacetylation between acetylornithine and glutamate. The sequence is that of Arginine biosynthesis bifunctional protein ArgJ, chloroplastic from Ricinus communis (Castor bean).